The chain runs to 880 residues: MANLPKSSVNYPGTLTPLEPNRPSPQPDRTPVPHSPPVVASPIPPRFPQPSFRPDQMSSPSMKSPSLLSPANGIRTGSPIPRLSTPPGPPVFNTPVKPAAVPFRTSPATPQPMAYSSANSSLPVSTPSFYSNGSSVGSQRDLPDVVRMEEPIAADSPYVLFSANKVLKQKKLANVASLGFGAIVSAGREISPGPQIIQRDPHRCLNCGAYSNPYSSILIGSGQWQCVICENMNGSKGEYVASSKNELQNFPELSLPLVDYVQTGNKRPGFVPASDSRTSAPVVLVIDECLDEPHLQHLQSSLHAFVDSLPQTTRLGIILYGRTVSIYDFSEDSVASADVISGAKSPSAESMKALIYGTGVYLSPMHASLKVAHEIFSSLRPYTLNVPEASRDRCLGTAVEAALAIIQGPSAEMSRGVVRRAGGNSRIIVCAGGPITYGPGSVPHSMSHPNYPYMEKTAIKWMENLGREAHRHNTVVDILCAGTCPLRVPILQPLAKASGGVLVLHDDFGEAFGVDLQRAATRAAGSHGLLEVRCSDDILITQVIGPGEEAHSETHETFKSDAALSIQMLSVEETQSFSLSMENKRDIKSDHVFFQFAFHYSDVYQADVSRVITFKLPTVDSISAYLQSVEDEASAVLISKRTLLLAKNQKDAVDMRATVDERIKDIALKFGSQVPKSKLYSFPKELSSLPELLFHLRRGPLLGNIIGHEDERSVLRNLFLNASFDLSLRMVAPRCLMHQEGGTFEELPAYDLSMQSDKAVILDHGTDVFIWLGAELSADEVKSAAVLAACRTLAEELTEFRFPAPRILAFKEGSSQARYFVCRLIPAHKDPPYEQEARFPQIRTLTTEQRMKLKSSFIEFDEASFCEWMRSLKVVPPEPR.

The span at 1–13 (MANLPKSSVNYPG) shows a compositional bias: polar residues. The segment at 1–95 (MANLPKSSVN…PPGPPVFNTP (95 aa)) is disordered. Residues 20–36 (PNRPSPQPDRTPVPHSP) show a composition bias toward pro residues. Positions 57-70 (MSSPSMKSPSLLSP) are enriched in low complexity. Cys204, Cys207, Cys226, and Cys229 together coordinate Zn(2+). The segment at 204–229 (CLNCGAYSNPYSSILIGSGQWQCVIC) is zinc finger-like.

This sequence belongs to the SEC23/SEC24 family. SEC24 subfamily. As to quaternary structure, component of the coat protein complex II (COPII), composed of at least five proteins: the Sec23/24 complex, the Sec13/31 complex and Sar1. In terms of tissue distribution, mostly expressed in seedlings, roots, cotyledons, leaves, trichomes, leaf primordia and flowers, and, to a lower extent, in mature siliques.

It is found in the cytoplasmic vesicle. The protein localises to the COPII-coated vesicle membrane. It localises to the endoplasmic reticulum membrane. The protein resides in the membrane. Component of the coat protein complex II (COPII) which promotes the formation of transport vesicles from the endoplasmic reticulum (ER). The coat has two main functions, the physical deformation of the endoplasmic reticulum membrane into vesicles and the selection of cargo molecules. May contribute to COPII-coated vesicles formation and ER-Golgi vesicle transport. Together with SEC23D, essential for pollen wall development and exine patterning, probably by regulating endoplasmic reticulum (ER) export of lipids and proteins (e.g. sporopollenin) necessary for pollen wall formation. Also involved in plastid physiology in anther tapetal cells. The chain is Protein transport protein SEC23 A from Arabidopsis thaliana (Mouse-ear cress).